We begin with the raw amino-acid sequence, 373 residues long: Alanine racemase (373 aa).

Lysine 40 (proton acceptor; specific for D-alanine) is an active-site residue. Position 40 is an N6-(pyridoxal phosphate)lysine (lysine 40). Residue arginine 140 coordinates substrate. Tyrosine 268 acts as the Proton acceptor; specific for L-alanine in catalysis. Residue methionine 315 participates in substrate binding.

This sequence belongs to the alanine racemase family. Pyridoxal 5'-phosphate is required as a cofactor.

It carries out the reaction L-alanine = D-alanine. It participates in amino-acid biosynthesis; D-alanine biosynthesis; D-alanine from L-alanine: step 1/1. In terms of biological role, catalyzes the interconversion of L-alanine and D-alanine. May also act on other amino acids. This Limosilactobacillus fermentum (strain NBRC 3956 / LMG 18251) (Lactobacillus fermentum) protein is Alanine racemase (alr).